The primary structure comprises 431 residues: Putative malic acid transport protein (431 aa).

10 helical membrane passes run 30-50 (FTWA…VTSL), 62-82 (GKII…CITF), 101-121 (VLFM…LYPY), 136-156 (ILYW…FYSL), 167-187 (IIPA…IASA), 201-221 (VVAG…VYAV), 239-259 (GMFI…DLAF), 284-304 (FMAL…FVSV), 318-338 (VSWF…QELG), and 346-366 (VCIV…ILIL). Basic and acidic residues predominate over residues 402-424 (EEEKDEAERSKRKAEESDGKTTR). Residues 402-431 (EEEKDEAERSKRKAEESDGKTTRELTSGGL) form a disordered region.

It belongs to the tellurite-resistance/dicarboxylate transporter (TDT) family.

Its subcellular location is the membrane. This chain is Putative malic acid transport protein, found in Schizosaccharomyces pombe (strain 972 / ATCC 24843) (Fission yeast).